Here is a 230-residue protein sequence, read N- to C-terminus: Flagellar L-ring protein (230 aa).

Positions 1 to 21 are cleaved as a signal peptide; the sequence is MMLKTVLRLPVCAALLALAAG. A lipid anchor (N-palmitoyl cysteine) is attached at Cys-22. The S-diacylglycerol cysteine moiety is linked to residue Cys-22. Residues 34–53 form a disordered region; it reads PLTAPPPPPPQPSARPNGSI. The span at 36–46 shows a compositional bias: pro residues; it reads TAPPPPPPQPS.

This sequence belongs to the FlgH family. In terms of assembly, the basal body constitutes a major portion of the flagellar organelle and consists of four rings (L,P,S, and M) mounted on a central rod.

It is found in the cell outer membrane. The protein localises to the bacterial flagellum basal body. Functionally, assembles around the rod to form the L-ring and probably protects the motor/basal body from shearing forces during rotation. This is Flagellar L-ring protein from Bordetella parapertussis (strain 12822 / ATCC BAA-587 / NCTC 13253).